A 296-amino-acid chain; its full sequence is Meiotically up-regulated gene 2 protein (296 aa).

The protein belongs to the UPF0612 family.

It localises to the cytoplasm. Its subcellular location is the nucleus. Has a role in meiosis. The chain is Meiotically up-regulated gene 2 protein (mug2) from Schizosaccharomyces pombe (strain 972 / ATCC 24843) (Fission yeast).